Consider the following 426-residue polypeptide: Enolase (426 aa).

Gln-162 is a binding site for (2R)-2-phosphoglycerate. Glu-204 functions as the Proton donor in the catalytic mechanism. The Mg(2+) site is built by Asp-241, Glu-286, and Asp-313. Residues Lys-338, Arg-367, Ser-368, and Lys-389 each contribute to the (2R)-2-phosphoglycerate site. The active-site Proton acceptor is Lys-338.

Belongs to the enolase family. It depends on Mg(2+) as a cofactor.

It is found in the cytoplasm. The protein localises to the secreted. Its subcellular location is the cell surface. It catalyses the reaction (2R)-2-phosphoglycerate = phosphoenolpyruvate + H2O. Its pathway is carbohydrate degradation; glycolysis; pyruvate from D-glyceraldehyde 3-phosphate: step 4/5. Its function is as follows. Catalyzes the reversible conversion of 2-phosphoglycerate (2-PG) into phosphoenolpyruvate (PEP). It is essential for the degradation of carbohydrates via glycolysis. In Aliarcobacter butzleri (strain RM4018) (Arcobacter butzleri), this protein is Enolase.